The following is a 1546-amino-acid chain: Hybrid signal transduction histidine kinase D (1546 aa).

Positions 36 to 63 (MRKQKPDHEKTREELIEEINHLRAVSNS) form a coiled coil. The PAS domain occupies 65 to 131 (KNARIMLDEM…NIDNVREAVH (67 aa)). A PAC domain is found at 139–193 (IRYETEIFGKSAGTEKITIDFSLMPLFNDKGEVSLILPEGRNITEKRLGELEIER). Residues 218–440 (NVSHELRTPL…QFTLRLPLTP (223 aa)) enclose the Histidine kinase 1 domain. At His221 the chain carries Phosphohistidine; by autocatalysis. The region spanning 571-686 (IVLVVEDNPE…ELVARVVNLM (116 aa)) is the Response regulatory 1 domain. A 4-aspartylphosphate modification is found at Asp619. Positions 747 to 1010 (NLSHELRTPL…QFTVVLPIIK (264 aa)) constitute a Histidine kinase 2 domain. Position 750 is a phosphohistidine; by autocatalysis (His750). 2 stretches are compositionally biased toward low complexity: residues 1013–1031 (SSSNSSPSNQLSCSSSPPL) and 1042–1146 (NYIN…SNNN). Disordered stretches follow at residues 1013 to 1148 (SSSN…NNEK), 1266 to 1285 (NNSNNDDNSNNTTIPTPPSS), and 1313 to 1350 (PLSELKSSSNNNNNNNNNSNNNNNNSMSPNLRSPKANS). Residues 1313–1346 (PLSELKSSSNNNNNNNNNSNNNNNNSMSPNLRSP) are compositionally biased toward low complexity. In terms of domain architecture, Response regulatory 2 spans 1359-1483 (QIMLVDDLEE…ELSNSILTLI (125 aa)). Asp1412 carries the 4-aspartylphosphate modification. Residues 1500-1546 (QNNNNNNNNNNNNNNNNNNNNNNINNGNDDDSLLLTDSRPCKKANSQ) form a disordered region. A compositionally biased stretch (low complexity) spans 1501-1526 (NNNNNNNNNNNNNNNNNNNNNNINNG).

The enzyme catalyses ATP + protein L-histidine = ADP + protein N-phospho-L-histidine.. Its function is as follows. Acts as a receptor histidine kinase for a signal transduction pathway. This protein undergoes an ATP-dependent autophosphorylation at a conserved histidine residue in the kinase core, and a phosphoryl group is then transferred to a conserved aspartate residue in the receiver domain. This chain is Hybrid signal transduction histidine kinase D (dhkD), found in Dictyostelium discoideum (Social amoeba).